The primary structure comprises 733 residues: Putative cyclic nucleotide-gated ion channel 9 (733 aa).

The Cytoplasmic portion of the chain corresponds to 1-117; the sequence is MLDCGKKAVK…DKFLLLCNKL (117 aa). Residues 118 to 138 form a helical membrane-spanning segment; the sequence is FVTSCILAVSVDPLFLYLPFV. Topologically, residues 139–151 are extracellular; that stretch reads KDNEKCIGIDRKL. The chain crosses the membrane as a helical span at residues 152 to 172; it reads AIIATTLRTVIDAFYLFHMAL. Over 173–207 the chain is Cytoplasmic; the sequence is RFRTAFVAPSSRVFGRGELVIDPAQIAKRYLQQYF. The helical transmembrane segment at 208–228 threads the bilayer; the sequence is IIDFLSVLPLPQIVVWRFLYI. Over 229–239 the chain is Extracellular; the sequence is SKGASVLATKR. Residues 240-260 traverse the membrane as a helical segment; it reads ALRSIILVQYIPRFIRLYPLS. The Cytoplasmic segment spans residues 261 to 280; sequence SELKRTAGVFAETAWAGAAY. Residues 281–301 form a helical membrane-spanning segment; that stretch reads YLLLYMLASHIVGAIWYLLAL. The Extracellular segment spans residues 302–406; the sequence is ERYNGCWTKV…GQGLETSTYP (105 aa). The helical transmembrane segment at 407 to 427 threads the bilayer; it reads GEVIFSIALAIAGLLLFALLI. The Cytoplasmic segment spans residues 428 to 733; that stretch reads GNMQTYLQSL…EPDFSADDTS (306 aa). A nucleoside 3',5'-cyclic phosphate is bound by residues 513–637 and Glu584; that span reads LFEN…SRQV. The segment at 629–644 is calmodulin-binding; that stretch reads FRRLHSRQVQHTFRFY. The 30-residue stretch at 649-678 folds into the IQ domain; the sequence is RTWAAIFIQAAWRRYVKKKKLEQLRKEEEE.

It belongs to the cyclic nucleotide-gated cation channel (TC 1.A.1.5) family. Homotetramer or heterotetramer.

Its subcellular location is the cell membrane. In terms of biological role, putative cyclic nucleotide-gated ion channel. The chain is Putative cyclic nucleotide-gated ion channel 9 (CNGC9) from Arabidopsis thaliana (Mouse-ear cress).